The chain runs to 144 residues: Putative pre-16S rRNA nuclease (144 aa).

The protein belongs to the YqgF nuclease family.

It is found in the cytoplasm. Functionally, could be a nuclease involved in processing of the 5'-end of pre-16S rRNA. This is Putative pre-16S rRNA nuclease from Pseudomonas aeruginosa (strain LESB58).